The following is a 207-amino-acid chain: Large ribosomal subunit protein bL25 (207 aa).

The tract at residues 171–207 (EEETVVTVSAPRAEEEPTTTEAPEPEAVHGKDEEPVE) is disordered. The span at 196-207 (EAVHGKDEEPVE) shows a compositional bias: basic and acidic residues.

Belongs to the bacterial ribosomal protein bL25 family. CTC subfamily. As to quaternary structure, part of the 50S ribosomal subunit; part of the 5S rRNA/L5/L18/L25 subcomplex. Contacts the 5S rRNA. Binds to the 5S rRNA independently of L5 and L18.

Functionally, this is one of the proteins that binds to the 5S RNA in the ribosome where it forms part of the central protuberance. The sequence is that of Large ribosomal subunit protein bL25 from Listeria monocytogenes serotype 4b (strain F2365).